The chain runs to 328 residues: Nucleotide-binding protein BLD_0430 (328 aa).

Positions 1-35 (MNQQTTNRDTGEAAATNAPANSATSTSTPDNQPTP) are disordered. A compositionally biased stretch (low complexity) spans 13 to 29 (AAATNAPANSATSTSTP). ATP is bound at residue 46 to 53 (GMSGAGRS). Position 101 to 104 (101 to 104 (DVRS)) interacts with GTP.

Belongs to the RapZ-like family.

In terms of biological role, displays ATPase and GTPase activities. This chain is Nucleotide-binding protein BLD_0430, found in Bifidobacterium longum (strain DJO10A).